A 405-amino-acid chain; its full sequence is S-adenosylmethionine synthase (405 aa).

Histidine 22 contributes to the ATP binding site. Aspartate 24 serves as a coordination point for Mg(2+). Glutamate 50 is a binding site for K(+). Glutamate 63 and glutamine 107 together coordinate L-methionine. The flexible loop stretch occupies residues 107–117 (QSPDIAQGVDR). Residues 184 to 186 (DGK), 250 to 251 (RF), aspartate 259, 265 to 266 (RK), alanine 282, and lysine 286 each bind ATP. L-methionine is bound at residue aspartate 259. Residue lysine 290 participates in L-methionine binding.

It belongs to the AdoMet synthase family. In terms of assembly, homotetramer; dimer of dimers. It depends on Mg(2+) as a cofactor. K(+) serves as cofactor.

The protein localises to the cytoplasm. The catalysed reaction is L-methionine + ATP + H2O = S-adenosyl-L-methionine + phosphate + diphosphate. It functions in the pathway amino-acid biosynthesis; S-adenosyl-L-methionine biosynthesis; S-adenosyl-L-methionine from L-methionine: step 1/1. In terms of biological role, catalyzes the formation of S-adenosylmethionine (AdoMet) from methionine and ATP. The overall synthetic reaction is composed of two sequential steps, AdoMet formation and the subsequent tripolyphosphate hydrolysis which occurs prior to release of AdoMet from the enzyme. This chain is S-adenosylmethionine synthase, found in Roseiflexus sp. (strain RS-1).